The primary structure comprises 552 residues: Putative transport protein NT01EI_3867 (552 aa).

A run of 5 helical transmembrane segments spans residues 4–24 (IALT…IGNW), 26–46 (IYGV…VGHF), 65–85 (FGLI…FFSS), 90–112 (GLRL…AAIH), and 158–178 (MGYA…IWLI). 2 RCK C-terminal domains span residues 191–276 (RDFD…VIGE) and 279–361 (DTSL…IVGN). 6 helical membrane passes run 371–391 (MLPV…PLFI), 403–425 (AGGP…LYWF), 439–459 (IVLF…DTLL), 464–484 (VTWI…AALL), 493–513 (YLTL…LAFA), and 530–550 (VYPL…LLFW).

The protein belongs to the AAE transporter (TC 2.A.81) family. YidE subfamily.

It is found in the cell membrane. In Edwardsiella ictaluri (strain 93-146), this protein is Putative transport protein NT01EI_3867.